The sequence spans 128 residues: Holo-[acyl-carrier-protein] synthase (128 aa).

Residues D8 and E60 each coordinate Mg(2+).

It belongs to the P-Pant transferase superfamily. AcpS family. The cofactor is Mg(2+).

It localises to the cytoplasm. It catalyses the reaction apo-[ACP] + CoA = holo-[ACP] + adenosine 3',5'-bisphosphate + H(+). In terms of biological role, transfers the 4'-phosphopantetheine moiety from coenzyme A to a Ser of acyl-carrier-protein. The sequence is that of Holo-[acyl-carrier-protein] synthase from Anaeromyxobacter sp. (strain K).